The primary structure comprises 184 residues: Large ribosomal subunit protein uL5 (184 aa).

It belongs to the universal ribosomal protein uL5 family. In terms of assembly, part of the 50S ribosomal subunit; part of the 5S rRNA/L5/L18/L25 subcomplex. Contacts the 5S rRNA and the P site tRNA. Forms a bridge to the 30S subunit in the 70S ribosome.

This is one of the proteins that bind and probably mediate the attachment of the 5S RNA into the large ribosomal subunit, where it forms part of the central protuberance. In the 70S ribosome it contacts protein S13 of the 30S subunit (bridge B1b), connecting the 2 subunits; this bridge is implicated in subunit movement. Contacts the P site tRNA; the 5S rRNA and some of its associated proteins might help stabilize positioning of ribosome-bound tRNAs. This is Large ribosomal subunit protein uL5 from Thermotoga maritima (strain ATCC 43589 / DSM 3109 / JCM 10099 / NBRC 100826 / MSB8).